A 194-amino-acid polypeptide reads, in one-letter code: Protein GrpE (194 aa).

Composition is skewed to basic and acidic residues over residues 1–19 (MSKE…ENTS) and 26–44 (KKEA…NQKL). Residues 1 to 44 (MSKEEFPSEKNLDKEENTSKPKKAVKKEAAKGEETKKNNENQKL) form a disordered region.

Belongs to the GrpE family. In terms of assembly, homodimer.

It is found in the cytoplasm. Participates actively in the response to hyperosmotic and heat shock by preventing the aggregation of stress-denatured proteins, in association with DnaK and GrpE. It is the nucleotide exchange factor for DnaK and may function as a thermosensor. Unfolded proteins bind initially to DnaJ; upon interaction with the DnaJ-bound protein, DnaK hydrolyzes its bound ATP, resulting in the formation of a stable complex. GrpE releases ADP from DnaK; ATP binding to DnaK triggers the release of the substrate protein, thus completing the reaction cycle. Several rounds of ATP-dependent interactions between DnaJ, DnaK and GrpE are required for fully efficient folding. In Lactobacillus acidophilus (strain ATCC 700396 / NCK56 / N2 / NCFM), this protein is Protein GrpE.